Here is a 798-residue protein sequence, read N- to C-terminus: MNLQLIFWIGLISSVCCVFGQADEDRCLKANAKSCGECIQAGPNCGWCTNSTFLQEGMPTSARCDDLEALKKKGCHPNDTENPRGSKDIKKNKNVTNRSKGTAEKLQPEDITQIQPQQLVLQLRSGEPQTFTLKFKRAEDYPIDLYYLMDLSYSMKDDLENVKSLGTDLMNEMRRITSDFRIGFGSFVEKTVMPYISTTPAKLRNPCTNEQNCTSPFSYKNVLSLTDKGEVFNELVGKQRISGNLDSPEGGFDAIMQVAVCGSLIGWRNVTRLLVFSTDAGFHFAGDGKLGGIVLPNDGQCHLKNDVYTMSHYYDYPSIAHLVQKLSENNIQTIFAVTEEFQPVYKELKNLIPKSAVGTLSANSSNVIQLIIDAYNSLSSEVILENSKLPEGVTINYKSYCKNGVNGTGENGRKCSNISIGDEVQFEISITANKCPDKNSETIKIKPLGFTEEVEIILQFICECECQGEGIPGSPKCHDGNGTFECGACRCNEGRVGRHCECSTDEVNSEDMDAYCRKENSSEICSNNGECVCGQCVCRKRDNTNEIYSGKFCECDNFNCDRSNGLICGGNGVCKCRVCECNPNYTGSACDCSLDTTSCMAVNGQICNGRGVCECGACKCTDPKFQGPTCEMCQTCLGVCAEHKECVQCRAFNKGEKKDTCAQECSHFNITKVENRDKLPQPGQVDPLSHCKEKDVDDCWFYFTYSVNGNNEATVHVVETPECPTGPDIIPIVAGVVAGIVLIGLALLLIWKLLMIIHDRREFAKFEKERMNAKWDTGENPIYKSAVTTVVNPKYEGK.

The signal sequence occupies residues 1–20 (MNLQLIFWIGLISSVCCVFG). The Extracellular segment spans residues 21–728 (QADEDRCLKA…ETPECPTGPD (708 aa)). Positions 26 to 76 (RCLKANAKSCGECIQAGPNCGWCTNSTFLQEGMPTSARCDDLEALKKKGCH) constitute a PSI domain. Disulfide bonds link Cys-27–Cys-45, Cys-35–Cys-464, Cys-38–Cys-64, Cys-48–Cys-75, Cys-207–Cys-213, Cys-261–Cys-301, Cys-401–Cys-415, Cys-435–Cys-462, Cys-466–Cys-486, Cys-477–Cys-489, Cys-491–Cys-500, Cys-502–Cys-533, Cys-516–Cys-531, Cys-525–Cys-536, Cys-538–Cys-553, Cys-555–Cys-576, Cys-560–Cys-574, Cys-568–Cys-579, Cys-581–Cys-590, Cys-592–Cys-615, Cys-599–Cys-613, Cys-607–Cys-618, Cys-620–Cys-630, Cys-633–Cys-636, Cys-640–Cys-691, Cys-646–Cys-665, Cys-649–Cys-661, and Cys-699–Cys-723. The span at 75 to 91 (CHPNDTENPRGSKDIKK) shows a compositional bias: basic and acidic residues. The interval 75–105 (CHPNDTENPRGSKDIKKNKNVTNRSKGTAEK) is disordered. N-linked (GlcNAc...) asparagine glycans are attached at residues Asn-94 and Asn-97. Residues 140 to 378 (DYPIDLYYLM…QLIIDAYNSL (239 aa)) enclose the VWFA domain. Ser-152 and Ser-154 together coordinate Mg(2+). Ser-154, Asp-157, Asp-158, and Glu-189 together coordinate Ca(2+). A CX3CL1-binding region spans residues 207 to 213 (CTNEQNC). N-linked (GlcNAc...) asparagine glycosylation is present at Asn-212. Positions 244, 246, 248, and 249 each coordinate Ca(2+). Glu-249 contributes to the Mg(2+) binding site. N-linked (GlcNAc...) asparagine glycosylation is present at Asn-269. Positions 295-314 (LPNDGQCHLKNDVYTMSHYY) are CX3CL1-binding. Ala-362 contributes to the Ca(2+) binding site. Positions 383–465 (ILENSKLPEG…IILQFICECE (83 aa)) are interaction with TMEM182. N-linked (GlcNAc...) asparagine glycans are attached at residues Asn-406 and Asn-417. I-EGF domains are found at residues 466–501 (CQGE…RHCE), 502–554 (CSTD…KFCE), 555–591 (CDNF…SACD), and 592–631 (CSLD…PTCE). Asn-481 carries N-linked (GlcNAc...) asparagine glycosylation. N-linked (GlcNAc...) asparagine glycosylation occurs at Asn-520. Residue Asn-584 is glycosylated (N-linked (GlcNAc...) asparagine). The N-linked (GlcNAc...) asparagine glycan is linked to Asn-669. Residues 729–749 (IIPIVAGVVAGIVLIGLALLL) form a helical membrane-spanning segment. The Cytoplasmic portion of the chain corresponds to 750 to 798 (IWKLLMIIHDRREFAKFEKERMNAKWDTGENPIYKSAVTTVVNPKYEGK). Residues 762-767 (EFAKFE) form a signal for sorting from recycling endosomes; interaction with ACAP1 region. A Phosphothreonine modification is found at Thr-777. Position 783 is a phosphotyrosine (Tyr-783). A Phosphoserine modification is found at Ser-785. An interaction with ITGB1BP1 region spans residues 785–792 (SAVTTVVN). Thr-789 bears the Phosphothreonine mark. Lys-794 is subject to N6-acetyllysine; alternate. Lys-794 participates in a covalent cross-link: Glycyl lysine isopeptide (Lys-Gly) (interchain with G-Cter in SUMO1); alternate.

The protein belongs to the integrin beta chain family. As to quaternary structure, interacts with seprase FAP (seprase); the interaction occurs at the cell surface of invadopodia membrane in a collagen-dependent manner. Heterodimer of an alpha and a beta subunit. Beta-1 associates with either alpha-1, alpha-2, alpha-3, alpha-4, alpha-5, alpha-6, alpha-7, alpha-8, alpha-9, alpha-10, alpha-11 or alpha-V. ITGA6:ITGB1 is found in a complex with CD9; interaction takes place in oocytes and is involved in sperm-egg fusion. Binds LGALS3BP and NMRK2, when associated with alpha-7, but not with alpha-5. Interacts with FLNA, FLNB, FLNC and RANBP9. Interacts with KRT1 in the presence of RACK1 and SRC. Interacts with JAML; integrin alpha-4/beta-1 may regulate leukocyte to endothelial cells adhesion by controlling JAML homodimerization. Interacts with RAB21. Interacts (via the cytoplasmic region) with RAB25 (via the hypervariable C-terminal region). Interacts with MYO10. Interacts with ITGB1BP1 (via C-terminal region); the interaction is a prerequisite for focal adhesion disassembly. Interacts with TLN1; the interaction is prevented by competitive binding of ITGB1BP1. Interacts with ACAP1; required for ITGB1 recycling. Interacts with ASAP3. Interacts with FERMT2; the interaction is inhibited in presence of ITGB1BP1. Interacts with DAB2. Interacts with FGR and HCK. Interacts with alpha-7A and alpha-7B in adult skeletal muscle. Interacts with alpha-7B in cardiomyocytes of adult heart. Interacts with EMP2; the interaction may be direct or indirect and ITGB1 has a heterodimer form. ITGA5:ITGB1 interacts with CCN3. ITGA4:ITGB1 is found in a ternary complex with CX3CR1 and CX3CL1. ITGA5:ITGB1 interacts with FBN1. ITGA5:ITGB1 acts as a receptor for fibronectin FN1 and mediates R-G-D-dependent cell adhesion to FN1. ITGA5:ITGB1 interacts with IL1B. Interacts with MDK. ITGA4:ITGB1 interacts with MDK; this interaction mediates MDK-induced osteoblast cells migration through PXN phosphorylation. ITGA6:ITGB1 interacts with MDK; this interaction mediates MDK-induced neurite-outgrowth. ITGA5:ITGB1 interacts with ACE2. Interacts with TMEM182 and LAMB1. Interacts with tensin TNS3; TNS3 also interacts with PEAK1, thus acting as an adapter molecule to bridge the association of PEAK1 with ITGB1. Interacts with tensin TNS4; the interaction displaces tensin TNS3 from the ITGB1 cytoplasmic tail and promotes ITGB1 stability. Integrin ITGA9:ITGB1 interacts with SPP1/OPN (via N-terminus). Integrin ITGA9:ITGB1 interacts with TNC/TNFN3 (via the 3rd Fibronectin type-III domain). Integrins ITGA4:ITGB1 and ITGA9:ITGB1 interact with SVEP1 (via Sushi domain 21); thereby inhibit Ca(2+) intracellular signaling and as a result repress vasocontraction. ITGA4:ITGB1 and ITGA5:ITGB1 interacts with SELP. Interacts with CD248. ITGA5:ITGB1 interacts with IGFBP1. ITGA4:ITGB1 interacts with BCAM. Interacts with ADGRG6.

It localises to the cell membrane. The protein resides in the cell projection. The protein localises to the invadopodium membrane. Its subcellular location is the ruffle membrane. It is found in the recycling endosome. It localises to the melanosome. The protein resides in the cell junction. The protein localises to the focal adhesion. Its subcellular location is the lamellipodium. It is found in the ruffle. Its function is as follows. Integrins alpha-1/beta-1, alpha-2/beta-1, alpha-10/beta-1 and alpha-11/beta-1 are receptors for collagen. Integrins alpha-1/beta-1 and alpha-2/beta-2 recognize the proline-hydroxylated sequence G-F-P-G-E-R in collagen. Integrins alpha-2/beta-1, alpha-3/beta-1, alpha-4/beta-1, alpha-5/beta-1, alpha-8/beta-1, alpha-10/beta-1, alpha-11/beta-1 and alpha-V/beta-1 are receptors for fibronectin. Alpha-4/beta-1 recognizes one or more domains within the alternatively spliced CS-1 and CS-5 regions of fibronectin. Integrin alpha-5/beta-1 is a receptor for fibrinogen. Integrin alpha-1/beta-1, alpha-2/beta-1, alpha-6/beta-1 and alpha-7/beta-1 are receptors for lamimin. Integrin alpha-6/beta-1 (ITGA6:ITGB1) is present in oocytes and is involved in sperm-egg fusion. Integrin alpha-4/beta-1 is a receptor for VCAM1 and recognizes the sequence Q-I-D-S in VCAM1. Integrin alpha-9/beta-1 is a receptor for VCAM1, cytotactin and osteopontin. It recognizes the sequence A-E-I-D-G-I-E-L in cytotactin. Integrin alpha-3/beta-1 is a receptor for epiligrin, thrombospondin and CSPG4. Integrin alpha-3/beta-1 provides a docking site for FAP (seprase) at invadopodia plasma membranes in a collagen-dependent manner and hence may participate in the adhesion, formation of invadopodia and matrix degradation processes, promoting cell invasion. Alpha-3/beta-1 may mediate with LGALS3 the stimulation by CSPG4 of endothelial cells migration. Integrin alpha-V/beta-1 is a receptor for vitronectin. Beta-1 integrins recognize the sequence R-G-D in a wide array of ligands. When associated with alpha-7/beta-1 integrin, regulates cell adhesion and laminin matrix deposition. Involved in promoting endothelial cell motility and angiogenesis. Involved in osteoblast compaction through the fibronectin fibrillogenesis cell-mediated matrix assembly process and the formation of mineralized bone nodules. May be involved in up-regulation of the activity of kinases such as PKC via binding to KRT1. Together with KRT1 and RACK1, serves as a platform for SRC activation or inactivation. Plays a mechanistic adhesive role during telophase, required for the successful completion of cytokinesis. ITGA4:ITGB1 binds to fractalkine (CX3CL1) and may act as its coreceptor in CX3CR1-dependent fractalkine signaling. ITGA4:ITGB1 and ITGA5:ITGB1 bind to PLA2G2A via a site (site 2) which is distinct from the classical ligand-binding site (site 1) and this induces integrin conformational changes and enhanced ligand binding to site 1. ITGA5:ITGB1 acts as a receptor for fibrillin-1 (FBN1) and mediates R-G-D-dependent cell adhesion to FBN1. ITGA5:ITGB1 is a receptor for IL1B and binding is essential for IL1B signaling. ITGA5:ITGB3 is a receptor for soluble CD40LG and is required for CD40/CD40LG signaling. Plays an important role in myoblast differentiation and fusion during skeletal myogenesis. ITGA9:ITGB1 may play a crucial role in SVEP1/polydom-mediated myoblast cell adhesion. Integrins ITGA9:ITGB1 and ITGA4:ITGB1 repress PRKCA-mediated L-type voltage-gated channel Ca(2+) influx and ROCK-mediated calcium sensitivity in vascular smooth muscle cells via their interaction with SVEP1, thereby inhibit vasocontraction. This Camelus bactrianus (Bactrian camel) protein is Integrin beta-1.